Consider the following 744-residue polypeptide: Endonuclease MutS2 (744 aa).

315 to 322 (GPNMGGKT) serves as a coordination point for ATP. One can recognise a Smr domain in the interval 668–743 (VDLRGLTVAE…GHGVTVVALR (76 aa)).

This sequence belongs to the DNA mismatch repair MutS family. MutS2 subfamily. In terms of assembly, homodimer. Interacts with MutL. Binds to stalled ribosomes, contacting rRNA.

Nuclease activity is stimulated by interaction with MutL. ATPase activity is stimulated by dsDNA. Its function is as follows. Endonuclease that is involved in the suppression of homologous recombination and may thus have a key role in the control of bacterial genetic diversity. Cleaves the phosphate backbone of oligodeoxynucleotides non-sequence-specifically at the 3' side of the phosphates. Preferably incises the branched DNA structures, especially the D-loop structure over the Holliday junction. Has ATPase activity. Binds to dsDNA but not to ssDNA. In terms of biological role, acts as a ribosome collision sensor, splitting the ribosome into its 2 subunits. Detects stalled/collided 70S ribosomes which it binds and splits by an ATP-hydrolysis driven conformational change. Acts upstream of the ribosome quality control system (RQC), a ribosome-associated complex that mediates the extraction of incompletely synthesized nascent chains from stalled ribosomes and their subsequent degradation. Probably generates substrates for RQC. The protein is Endonuclease MutS2 of Thermus thermophilus (strain ATCC 27634 / DSM 579 / HB8).